The chain runs to 247 residues: MWGPGVTAEGLSVAPAPPPLLPLLLLLALALVAPSRGGGGCAELACGERERCCDSANATAVRCCKLPLHAFLDNVGWFVRKLSGLLILLVLFAIGYFLQRIICPSPRRYPRGQARPGQARPGPPGGAGPPGTAGPPDDDDDSPALLRDEVAAGSQDSLLDSGGGRGRGSGGRLPPSCVSEHELHVVSPVFLQLPSYEEVKYLPTYEESMRLQQLSPAEVVLPVSVLGRPRGGSAGDSDGGQVRFPLI.

Residues M1–S35 form the signal peptide. The chain crosses the membrane as a helical span at residues L82–I102. Positions Y109 to S176 are disordered. A compositionally biased stretch (low complexity) spans R111 to R120. The span at S161–G171 shows a compositional bias: gly residues.

The protein resides in the membrane. This is an uncharacterized protein from Mus musculus (Mouse).